A 765-amino-acid polypeptide reads, in one-letter code: ATP-dependent RNA helicase DBP4 (765 aa).

Basic residues predominate over residues 1-14 (MAKPRRNNKNKKGQ). Positions 1–24 (MAKPRRNNKNKKGQSRSQAREKEE) are disordered. The Q motif signature appears at 47–75 (SQFSDLPITQETLRGLNESSFMSLTDIQK). A Helicase ATP-binding domain is found at 78 to 252 (IPIALKGEDL…RLSLTNPKRI (175 aa)). Residue 91-98 (ARTGSGKT) participates in ATP binding. Positions 200–203 (DEAD) match the DEAD box motif. A Helicase C-terminal domain is found at 266 to 438 (SLDQYYIRIP…SIRPQLQSLC (173 aa)). 3 disordered regions span residues 493–526 (KGGSSSKEKKNASRQLVALSKTNEDGESVENEAS), 552–576 (NGSQTKEDEDEEEEDDFMSVKRKDH), and 641–735 (KEQK…DKHN). Positions 558-568 (EDEDEEEEDDF) are enriched in acidic residues. 2 stretches are compositionally biased toward basic and acidic residues: residues 641-653 (KEQKKAFVSRETE) and 678-688 (KEVEKRMRDEE).

Belongs to the DEAD box helicase family. DDX10/DBP4 subfamily. Interacts with the U3 and U14 snoRNAs. Associates with pre-ribosomal complexes.

It is found in the nucleus. It localises to the nucleolus. It catalyses the reaction ATP + H2O = ADP + phosphate + H(+). In terms of biological role, ATP-dependent RNA helicase required for ribosome biogenesis. Involved in the release of U14 snoRNA in pre-ribosomal complexes. Required for pre-rRNA cleavage at site A2. In Scheffersomyces stipitis (strain ATCC 58785 / CBS 6054 / NBRC 10063 / NRRL Y-11545) (Yeast), this protein is ATP-dependent RNA helicase DBP4 (DBP4).